The sequence spans 413 residues: Cardiolipin synthase B (413 aa).

PLD phosphodiesterase domains lie at 108 to 135 (VFRR…SAEH) and 285 to 312 (RRRP…DPLS). Catalysis depends on residues His-113, Lys-115, Asp-120, His-290, Lys-292, and Asp-297. The segment at 390–413 (VGPPAQPTMETQDRVETENTGVKP) is disordered.

This sequence belongs to the phospholipase D family. Cardiolipin synthase subfamily. ClsB sub-subfamily.

Its subcellular location is the cell membrane. It carries out the reaction 2 a 1,2-diacyl-sn-glycero-3-phospho-(1'-sn-glycerol) = a cardiolipin + glycerol. Catalyzes the phosphatidyl group transfer from one phosphatidylglycerol molecule to another to form cardiolipin (CL) (diphosphatidylglycerol) and glycerol. The protein is Cardiolipin synthase B of Escherichia coli O6:H1 (strain CFT073 / ATCC 700928 / UPEC).